The primary structure comprises 621 residues: Lamin-C (621 aa).

Residues 1–47 (MSARRVTLNTRVSRASTSTPVGGASTSSRVGATSPTSPTRTSRQQEK) are disordered. A head region spans residues 1–47 (MSARRVTLNTRVSRASTSTPVGGASTSSRVGATSPTSPTRTSRQQEK). A compositionally biased stretch (polar residues) spans 7–31 (TLNTRVSRASTSTPVGGASTSSRVG). The segment covering 33 to 42 (TSPTSPTRTS) has biased composition (low complexity). S34 carries the post-translational modification Phosphoserine. In terms of domain architecture, IF rod spans 46 to 402 (EKEELQHLND…KLLCGEERRL (357 aa)). Residues 47–85 (KEELQHLNDRLACYIDRMRNLENENSRLTQELNLAQDTV) are coil 1A. A linker 1 region spans residues 86 to 95 (NRETSNLKAV). The coil 1B stretch occupies residues 96-233 (YEKELAAARK…QVHTQELTET (138 aa)). The tract at residues 234-257 (RSRRQIEISEIDGRLSRQYEAKLQ) is linker 2. Residues 258 to 403 (QSLQELRDQY…LLCGEERRLN (146 aa)) form a coil 2 region. A disordered region spans residues 404-458 (IESPGRPTTDSGISSNGSHLTASASSRSGRVTPSGRRSATPGISGSSAVKRRRTV). The tail stretch occupies residues 404 to 621 (IESPGRPTTD…GVRSLFSLLF (218 aa)). 2 positions are modified to phosphoserine: S406 and S441. Residues 409–450 (RPTTDSGISSNGSHLTASASSRSGRVTPSGRRSATPGISGSS) show a composition bias toward polar residues. T443 is modified (phosphothreonine). Positions 453–458 (KRRRTV) match the Nuclear localization signal motif. One can recognise an LTD domain in the interval 468 to 582 (SEYSVNAAAK…EDVASYDRVR (115 aa)). The tract at residues 585–605 (VSSHTSRHRSSGTPSTGFTLG) is disordered.

Belongs to the intermediate filament family. In terms of assembly, interacts with MAN1. In terms of tissue distribution, first detected from late stage 12 in the oenocytes, abdominal segments, hindgut and posterior spiracles, with expression increasing in stage 13 (at protein level). In stage 14, also becomes detectable in the foregut (at protein level). Stage 15 shows expression in the epidermis, dorsal longitudinal trunk, pharynx, esophagus and proventriculus, with the dorsal pharyngeal musculature showing expression in late stage 15 (at protein level). In stage 16 embryos, also detected in the exit glia with increasing expression in the somatic musculature (at protein level). Also detected in the visceral mesoderm but not in the midgut or central nervous system until the end of embryogenesis (at protein level). In third instar larvae, detectable at varying levels in all cell types (at protein level). Expressed in spermatocytes (at protein level).

The protein resides in the nucleus. It localises to the nucleus lamina. In terms of biological role, lamins are components of the nuclear lamina, a fibrous layer on the nucleoplasmic side of the inner nuclear membrane, which is thought to provide a framework for the nuclear envelope and may also interact with chromatin. In spermatocytes, regulates cytokinesis during meiosis. The polypeptide is Lamin-C (LamC) (Drosophila melanogaster (Fruit fly)).